We begin with the raw amino-acid sequence, 214 residues long: Probable GTP-binding protein EngB (214 aa).

An EngB-type G domain is found at 30-204; the sequence is EGFEVAFAGR…YTVLAGWMEL (175 aa). GTP-binding positions include 38–45, 64–68, 82–85, 149–152, and 182–185; these read GRSNAGKS, GRTQL, DLPG, TKAD, and LFSA. Mg(2+) contacts are provided by Ser45 and Thr66.

It belongs to the TRAFAC class TrmE-Era-EngA-EngB-Septin-like GTPase superfamily. EngB GTPase family. The cofactor is Mg(2+).

Necessary for normal cell division and for the maintenance of normal septation. The protein is Probable GTP-binding protein EngB of Pseudomonas fluorescens (strain Pf0-1).